Consider the following 583-residue polypeptide: MDRNSVTGLALIALIMIVWLQFMSPDKKSVQPDNRPKAQTTATVSQEKTEAPAALRSDTFGVFAEASTGAEELVTVDNELFTMTLSSKGATIKSVVLKNHLDGQLKPFDLVSSHDKGALSLLFLNVEGKKIDTRELYFRLVSQEKKQTLSGKKIAVVRYRLDINPQQAIDIVYRFSGNSYKVDYDVKLTGFDNALAGNEYQLQWDGGLAYSEKNREDESHNALAGAFLGGSLVKIDASKENQTYREEQSGEAGWVAVRNKYFVAALIPGSKTEGIYLEGKKGSGHFEEYLASLKMSVPSTEKVASNHFSLYIGPLDYNTVKTLDANLEKIMDFGWDWLTRPFAEYVILPVFTWMNGFISNYGLIIIIFALLIKLVTYPLSMASTKSMKKMAALQPMLKELQEKYKDNPAKLQSELGRIYKEAGVNPLGGCLPVVLQMPLLFAMFYVFRSSIQLRHHGFLWAKDLSVPDSILDFGFSIPVYGDHIAVFPILMGVTVFIQQKITPTTQSNDQMKMMLYIFPVTMLLFFNNLPAGLGLYYLMFNVFSVAQQFYINSTTSTDDVPKAALEAASAAVASKKKKGSSKK.

A helical membrane pass occupies residues 5–25 (SVTGLALIALIMIVWLQFMSP). Residues 28–50 (KSVQPDNRPKAQTTATVSQEKTE) are disordered. Over residues 37–46 (KAQTTATVSQ) the composition is skewed to polar residues. Helical transmembrane passes span 341-361 (PFAE…ISNY), 362-382 (GLII…LSMA), 427-447 (LGGC…FYVF), 477-497 (IPVY…TVFI), and 515-535 (LYIF…GLGL).

It belongs to the OXA1/ALB3/YidC family. Type 1 subfamily. Interacts with the Sec translocase complex via SecD. Specifically interacts with transmembrane segments of nascent integral membrane proteins during membrane integration.

The protein resides in the cell inner membrane. Its function is as follows. Required for the insertion and/or proper folding and/or complex formation of integral membrane proteins into the membrane. Involved in integration of membrane proteins that insert both dependently and independently of the Sec translocase complex, as well as at least some lipoproteins. Aids folding of multispanning membrane proteins. This is Membrane protein insertase YidC from Chlorobium limicola (strain DSM 245 / NBRC 103803 / 6330).